Reading from the N-terminus, the 178-residue chain is ATP-dependent protease subunit HslV (178 aa).

T7 is an active-site residue. Na(+) contacts are provided by G162, C165, and T168.

The protein belongs to the peptidase T1B family. HslV subfamily. As to quaternary structure, a double ring-shaped homohexamer of HslV is capped on each side by a ring-shaped HslU homohexamer. The assembly of the HslU/HslV complex is dependent on binding of ATP.

It localises to the cytoplasm. The enzyme catalyses ATP-dependent cleavage of peptide bonds with broad specificity.. Its activity is regulated as follows. Allosterically activated by HslU binding. Functionally, protease subunit of a proteasome-like degradation complex believed to be a general protein degrading machinery. The polypeptide is ATP-dependent protease subunit HslV (Cupriavidus metallidurans (strain ATCC 43123 / DSM 2839 / NBRC 102507 / CH34) (Ralstonia metallidurans)).